A 292-amino-acid chain; its full sequence is Elongation factor Ts (292 aa).

The involved in Mg(2+) ion dislocation from EF-Tu stretch occupies residues 79 to 82; that stretch reads TDFV.

It belongs to the EF-Ts family.

The protein localises to the cytoplasm. Functionally, associates with the EF-Tu.GDP complex and induces the exchange of GDP to GTP. It remains bound to the aminoacyl-tRNA.EF-Tu.GTP complex up to the GTP hydrolysis stage on the ribosome. In Mycoplasmoides gallisepticum (strain R(low / passage 15 / clone 2)) (Mycoplasma gallisepticum), this protein is Elongation factor Ts.